We begin with the raw amino-acid sequence, 350 residues long: MKQKDLKRAYNNVLAQAISGSKQYLFAGNLFGDIFVLRIKELDKGSEEPPGKLKIFPQGSDVDINYLAFHRDFLIVGAVGLIYGLEWNEEEESLATKRSWEVKIPMQVDAVEVPDVNSMWLDSENSILFAGCGDGVIYQVSLEDGRIQREYRGHTDYVHSVVGNANGQIFSGAEDGTVRVWSTKQQQHTSMLEPYKNPNLLRPDWGKWIGAVAVNEDWLLCGGGPKASIFHLRSMESTCVFSFPGRVHLCDFVDDCVLIGGEHNHVQSYTLNGVLQANIPVEHTACYSAVWQTSPIKFISIAGFSNKLHILKDFRFLDSKIEMYGNVEGEENDPEEEDELIEKPLTVEAA.

A WD repeat occupies 151–191; it reads YRGHTDYVHSVVGNANGQIFSGAEDGTVRVWSTKQQQHTSM. Over residues 328–340 the composition is skewed to acidic residues; it reads EGEENDPEEEDEL. The disordered stretch occupies residues 328–350; the sequence is EGEENDPEEEDELIEKPLTVEAA.

The protein belongs to the WD repeat THOC6 family. As to quaternary structure, part of the THO complex containing HPR1, THOC2, THOC5, THOC6 and THOC7.

The THO complex is required for cell proliferation and for proper export of heat-shock mRNAs under heat stress. This is THO complex subunit 6 (thoc6) from Drosophila melanogaster (Fruit fly).